The primary structure comprises 270 residues: Myeloid leukemia factor 1 (270 aa).

4 positions are modified to phosphoserine: serine 6, serine 8, serine 32, and serine 34. The tract at residues 50 to 125 is interaction with COPS3; it reads RARNRMGHED…VGDEPPKVFQ (76 aa). Disordered regions lie at residues 127–148 and 221–247; these read STQTRRAPGGIKETRKALRDSD and RSVAHENSGSRELKRREKHHQSPAIEH. Residues 138 to 148 show a composition bias toward basic and acidic residues; sequence KETRKALRDSD.

This sequence belongs to the MLF family. In terms of assembly, interacts with CENPU. Also interacts with NRBP1/MADM, YWHAZ/14-3-3-zeta and HNRPUL2/MANP. NRBP1 recruits a serine kinase which phosphorylates both itself and MLF1. Phosphorylated MLF1 then binds to YWHAZ and is retained in the cytoplasm. Retained in the nucleus by binding to HNRPUL2. Binds to COPS3/CSN3 which is required for suppression of COP1 and activation of p53. Phosphorylation is required for binding to YWHAZ.

It localises to the cytoplasm. Its subcellular location is the nucleus. The protein resides in the cell projection. It is found in the cilium. The protein localises to the cytoskeleton. It localises to the cilium basal body. Involved in lineage commitment of primary hemopoietic progenitors by restricting erythroid formation and enhancing myeloid formation. Interferes with erythropoietin-induced erythroid terminal differentiation by preventing cells from exiting the cell cycle through suppression of CDKN1B/p27Kip1 levels. Suppresses COP1 activity via CSN3 which activates p53 and induces cell cycle arrest. Binds DNA and affects the expression of a number of genes so may function as a transcription factor in the nucleus. The chain is Myeloid leukemia factor 1 (MLF1) from Bos taurus (Bovine).